Here is a 574-residue protein sequence, read N- to C-terminus: MRTSQYLLSTLKETPSDAEIVSHQLMLRAGMIRKLASGMYAWLPSGLRVLKKIENIVREEMNNAGAIEVSMPVVQPAELWQESGRWDDYGPELCRLTDRHNRPFVLGPTHEEVITSLVRYEVNSYKQLPLNLYQIQTKFRDEVRPRFGVMRGREFLMKDAYSFHIDKASLIETYERMHAAYCAAFTRMGLNFRPVQADTGSIGGTGSHEFQVLAESGEDLIAFSDTSDYAANIEMAEALAPAGERPAATAALTKVATPAVHTIDEVAAFLNVAPAAIAKTLLVLGEEDEHGNQAVIALVLRGDHELNEIKAEKLAGVANPLTFANDEQIKAAAGCDAGSIGPVGFAGRIIADRSAAHLADFVCGANETGFHLTGANWDRDIASYEVADLRNVVEGDPSPCGQGKLLLKRGIEVGHIFQLGTKYSEAMKASVLNEGGKSVTMEMGCYGIGVSRLVAAAIEQNNDQYGIIWPEAIAPFEVAIVPMNMHKSERVAEQAQQFYAELKAAGVDVLFDDRKERPGVMFADMELLGVPHAIVIGDRGLDNGVVEYKCRRTGEKQEVAISEIVALLKAKLGR.

Belongs to the class-II aminoacyl-tRNA synthetase family. ProS type 1 subfamily. Homodimer.

It is found in the cytoplasm. The catalysed reaction is tRNA(Pro) + L-proline + ATP = L-prolyl-tRNA(Pro) + AMP + diphosphate. Functionally, catalyzes the attachment of proline to tRNA(Pro) in a two-step reaction: proline is first activated by ATP to form Pro-AMP and then transferred to the acceptor end of tRNA(Pro). As ProRS can inadvertently accommodate and process non-cognate amino acids such as alanine and cysteine, to avoid such errors it has two additional distinct editing activities against alanine. One activity is designated as 'pretransfer' editing and involves the tRNA(Pro)-independent hydrolysis of activated Ala-AMP. The other activity is designated 'posttransfer' editing and involves deacylation of mischarged Ala-tRNA(Pro). The misacylated Cys-tRNA(Pro) is not edited by ProRS. This chain is Proline--tRNA ligase, found in Aeromonas hydrophila subsp. hydrophila (strain ATCC 7966 / DSM 30187 / BCRC 13018 / CCUG 14551 / JCM 1027 / KCTC 2358 / NCIMB 9240 / NCTC 8049).